The primary structure comprises 508 residues: MARSVLSALSELRETRLEKAQALKELGNGPYALRFESSHRTANLQADHADLAKGEERLLSVSVAGRVMARRVMGKLAFYTLADETGTIQLYLDKATIDAAASNELASGTFVQLTTLVDAGDWIGVTGVLRRTDRGELSVKVQQWQILSKSLQPLPDKWHGLADVEKRYRQRYLDLIVSPQSRETFRRRALMVSAIRRWLDDRAFLEIETPVLQAEAGGAEARPFITHHNTLDLPLYLRIATELHLKRLVVGGFERVYELGRIFRNEGMSTRHNPEFTSVEVYQAYADYIDMMVLTEQLISSVCTQICGSTRITYQGIEIDLTPPWRRASMHELVQEATGLDFMGFADRAVAASAMARAGLEVPSKADSVGRLLNEAFEQAVEVSLIQPTFVLDYPIEISPLARQHRSKPGLVERFELFIVGRETANAFSELIDPLDQRQRLEAQQARRQAGDLEAHGVDEDFLQALEVGMPPTGGLGIGIDRLVMLFTDSPSIRDVIAFPLLRPELKT.

The Mg(2+) site is built by Glu-416 and Glu-423.

The protein belongs to the class-II aminoacyl-tRNA synthetase family. In terms of assembly, homodimer. Mg(2+) serves as cofactor.

It is found in the cytoplasm. The enzyme catalyses tRNA(Lys) + L-lysine + ATP = L-lysyl-tRNA(Lys) + AMP + diphosphate. The polypeptide is Lysine--tRNA ligase (Prochlorococcus marinus (strain MIT 9303)).